The primary structure comprises 180 residues: UPF0227 protein CKO_01948 (180 aa).

Belongs to the UPF0227 family.

The protein is UPF0227 protein CKO_01948 of Citrobacter koseri (strain ATCC BAA-895 / CDC 4225-83 / SGSC4696).